The following is a 166-amino-acid chain: Transcription factor HES-5 (166 aa).

In terms of domain architecture, bHLH spans 16 to 72; that stretch reads KNRLRKPVVEKMRRDRINSSIEQLKLLLEQEFARHQPNSKLEKADILEMAVSYLKHS. One can recognise an Orange domain in the interval 88 to 119; sequence YSEGYSWCLQEAVQFLTLHAASDTQMKLLYHF. Positions 125-166 are disordered; that stretch reads PAAPVKETPTPGAAPQPARSSTKAAASVSTSRQSACGLWRPW. The segment covering 142-156 has biased composition (low complexity); sequence ARSSTKAAASVSTSR. A WRPW motif motif is present at residues 163 to 166; that stretch reads WRPW.

As to quaternary structure, transcription repression requires formation of a complex with a corepressor protein of the Groucho/TLE family. Expressed predominantly in embryonic neural lineage cells.

Its subcellular location is the nucleus. Its function is as follows. Transcriptional repressor of genes that require a bHLH protein for their transcription. Plays an important role as neurogenesis negative regulator. This chain is Transcription factor HES-5 (Hes5), found in Rattus norvegicus (Rat).